A 259-amino-acid polypeptide reads, in one-letter code: O-antigen export system permease protein RfbA (259 aa).

6 helical membrane passes run 33-53 (LGYLWSVANPLLFAMIYYFIF), 73-95 (FPWQWFASSATNSLFSFIANAQI), 111-131 (VMMEGLHFLCTIPVIVVFLFV), 142-162 (WGIPLIAIGQVIFTFGVSIIF), 176-196 (VSLGIMLMFYCTPILYASDMI), and 228-248 (EYISILYFTGIILTVVGLSIF). Residues 33–251 (LGYLWSVANP…VVGLSIFNKL (219 aa)) form the ABC transmembrane type-2 domain.

It belongs to the ABC-2 integral membrane protein family.

It localises to the cell inner membrane. Functionally, may form an ATP-driven O-antigen export apparatus, in association with RfbB. This Klebsiella pneumoniae protein is O-antigen export system permease protein RfbA (rfbA).